Consider the following 619-residue polypeptide: Alpha-L-arabinofuranosidase C (619 aa).

The N-terminal stretch at 1 to 37 (MINHNKTPNILAKVFKRTCGLVSTGAALAILSQAASA) is a signal peptide. Residues 38–136 (ACTYTIDSEW…TVTGAACNSA (99 aa)) form the CBM2 domain. A disulfide bridge links Cys39 with Cys133. The CBM6 domain maps to 163–289 (LLQEAQAGFC…LPNIDSLSVV (127 aa)). The disordered stretch occupies residues 300–319 (SVSSSSSVQSSSSSSSTPSQ).

The protein belongs to the glycosyl hydrolase 62 family.

The protein localises to the secreted. It catalyses the reaction Hydrolysis of terminal non-reducing alpha-L-arabinofuranoside residues in alpha-L-arabinosides.. It functions in the pathway glycan metabolism; hemicellulose degradation. In terms of biological role, xylanase C contributes to hydrolyze hemicellulose, the major component of plant cell-walls. This Cellvibrio japonicus (strain Ueda107) (Pseudomonas fluorescens subsp. cellulosa) protein is Alpha-L-arabinofuranosidase C (xynC).